We begin with the raw amino-acid sequence, 23 residues long: ENFAVGCTPGYQRTADGRCKPTF.

A disulfide bridge connects residues Cys7 and Cys19.

This sequence belongs to the GBP/PSP1/paralytic peptide family.

In terms of biological role, has excitatory effects on a semi-isolated heart from larval Manduca sexta, causing an inotropic effect at low concentrations of peptide and chronotropic and inotropic effects at high doses. This chain is Cardioactive peptide CAP23, found in Spodoptera eridania (Southern armyworm).